The following is an 819-amino-acid chain: Ferric-pyoverdine 358 receptor (819 aa).

The signal sequence occupies residues methionine 1 to alanine 47. The short motif at asparagine 115–serine 122 is the TonB box element. One can recognise a TBDR plug domain in the interval serine 166–lysine 276. A TBDR beta-barrel domain is found at glutamate 281–phenylalanine 819. A TonB C-terminal box motif is present at residues tyrosine 802–phenylalanine 819.

Belongs to the TonB-dependent receptor family.

It is found in the cell outer membrane. Specific receptor for the siderophore ferric pyoverdine (pseudobactin) 358. The protein is Ferric-pyoverdine 358 receptor (pupA) of Pseudomonas putida (Arthrobacter siderocapsulatus).